The primary structure comprises 500 residues: Histidinol dehydrogenase homolog 1 (500 aa).

A disordered region spans residues 1–25; it reads MPPAGGIFHRPPTTRKSRRLTPRSA. Residues 12-21 are compositionally biased toward basic residues; that stretch reads PTTRKSRRLT. Zn(2+)-binding residues include Gln313 and His316. Active-site proton acceptor residues include Glu381 and His382. Residues Asp415 and His475 each contribute to the Zn(2+) site.

Belongs to the histidinol dehydrogenase family. Requires Zn(2+) as cofactor.

The chain is Histidinol dehydrogenase homolog 1 from Mesorhizobium japonicum (strain LMG 29417 / CECT 9101 / MAFF 303099) (Mesorhizobium loti (strain MAFF 303099)).